The primary structure comprises 356 residues: Glutamine synthetase PR-2 (356 aa).

Residues 19–99 (IIAEYIWVGG…VICDVYTPAG (81 aa)) form the GS beta-grasp domain. The segment at 37-66 (ARTLPGPVDDPAKLPKWNYDGSSTDQAPGD) is disordered. Residues 106 to 356 (KRYDAAKIFS…IAETTILWKP (251 aa)) enclose the GS catalytic domain.

It belongs to the glutamine synthetase family. Homooctamer. Roots.

Its subcellular location is the cytoplasm. The enzyme catalyses L-glutamate + NH4(+) + ATP = L-glutamine + ADP + phosphate + H(+). The protein is Glutamine synthetase PR-2 of Phaseolus vulgaris (Kidney bean).